The following is a 341-amino-acid chain: tRNA N6-adenosine threonylcarbamoyltransferase (341 aa).

Residues His-110 and His-114 each coordinate Fe cation. Substrate is bound by residues 133 to 137 (LVSGG), Asp-166, Gly-179, and Asn-276. Residue Asp-304 coordinates Fe cation.

It belongs to the KAE1 / TsaD family. Fe(2+) is required as a cofactor.

The protein localises to the cytoplasm. The enzyme catalyses L-threonylcarbamoyladenylate + adenosine(37) in tRNA = N(6)-L-threonylcarbamoyladenosine(37) in tRNA + AMP + H(+). Functionally, required for the formation of a threonylcarbamoyl group on adenosine at position 37 (t(6)A37) in tRNAs that read codons beginning with adenine. Is involved in the transfer of the threonylcarbamoyl moiety of threonylcarbamoyl-AMP (TC-AMP) to the N6 group of A37, together with TsaE and TsaB. TsaD likely plays a direct catalytic role in this reaction. The chain is tRNA N6-adenosine threonylcarbamoyltransferase from Saccharophagus degradans (strain 2-40 / ATCC 43961 / DSM 17024).